A 473-amino-acid chain; its full sequence is Bifunctional protein HldE (473 aa).

The interval 1–317 (MKLSMPRFDQ…RRAVQREQGS (317 aa)) is ribokinase. 194 to 197 (NLSE) provides a ligand contact to ATP. Residue D263 is part of the active site. Positions 343 to 473 (FTNGCFDILH…TAIVEKIRQR (131 aa)) are cytidylyltransferase.

The protein in the N-terminal section; belongs to the carbohydrate kinase PfkB family. In the C-terminal section; belongs to the cytidylyltransferase family. In terms of assembly, homodimer.

It carries out the reaction D-glycero-beta-D-manno-heptose 7-phosphate + ATP = D-glycero-beta-D-manno-heptose 1,7-bisphosphate + ADP + H(+). The enzyme catalyses D-glycero-beta-D-manno-heptose 1-phosphate + ATP + H(+) = ADP-D-glycero-beta-D-manno-heptose + diphosphate. It functions in the pathway nucleotide-sugar biosynthesis; ADP-L-glycero-beta-D-manno-heptose biosynthesis; ADP-L-glycero-beta-D-manno-heptose from D-glycero-beta-D-manno-heptose 7-phosphate: step 1/4. The protein operates within nucleotide-sugar biosynthesis; ADP-L-glycero-beta-D-manno-heptose biosynthesis; ADP-L-glycero-beta-D-manno-heptose from D-glycero-beta-D-manno-heptose 7-phosphate: step 3/4. Its function is as follows. Catalyzes the phosphorylation of D-glycero-D-manno-heptose 7-phosphate at the C-1 position to selectively form D-glycero-beta-D-manno-heptose-1,7-bisphosphate. Functionally, catalyzes the ADP transfer from ATP to D-glycero-beta-D-manno-heptose 1-phosphate, yielding ADP-D-glycero-beta-D-manno-heptose. This Pseudomonas aeruginosa (strain LESB58) protein is Bifunctional protein HldE.